Consider the following 212-residue polypeptide: Small ribosomal subunit protein uS3 (212 aa).

The region spanning 39-108 (IKNYIKERYK…EITISVVEVR (70 aa)) is the KH type-2 domain.

Belongs to the universal ribosomal protein uS3 family. Part of the 30S ribosomal subunit. Forms a tight complex with proteins S10 and S14.

In terms of biological role, binds the lower part of the 30S subunit head. Binds mRNA in the 70S ribosome, positioning it for translation. The polypeptide is Small ribosomal subunit protein uS3 (Aquifex aeolicus (strain VF5)).